The chain runs to 147 residues: Nucleoside diphosphate kinase (147 aa).

The ATP site is built by K9, F57, R85, T91, R102, and N112. Residue H115 is the Pros-phosphohistidine intermediate of the active site.

The protein belongs to the NDK family. The cofactor is Mg(2+).

The protein localises to the cytoplasm. It carries out the reaction a 2'-deoxyribonucleoside 5'-diphosphate + ATP = a 2'-deoxyribonucleoside 5'-triphosphate + ADP. The enzyme catalyses a ribonucleoside 5'-diphosphate + ATP = a ribonucleoside 5'-triphosphate + ADP. Its function is as follows. Major role in the synthesis of nucleoside triphosphates other than ATP. The ATP gamma phosphate is transferred to the NDP beta phosphate via a ping-pong mechanism, using a phosphorylated active-site intermediate. The polypeptide is Nucleoside diphosphate kinase (Thermoplasma volcanium (strain ATCC 51530 / DSM 4299 / JCM 9571 / NBRC 15438 / GSS1)).